A 587-amino-acid chain; its full sequence is Serine/threonine-protein phosphatase 2A 65 kDa regulatory subunit A gamma isoform (587 aa).

Position 2 is an N-acetylserine (Ser2). HEAT repeat units follow at residues 2 to 42 (SMVD…ALGE), 44 to 80 (RTRK…YVGG), 81 to 119 (VEYA…QMRE), 158 to 194 (DVLK…AATI), 197 to 235 (AHLK…LLEP), 236 to 274 (QDCV…AVGP), 276 to 313 (PTRT…ILNP), 314 to 352 (ELAI…VLGK), 353 to 391 (DATI…VIGI), 393 to 430 (LLSQ…QLGV), 432 to 469 (FFDE…EFGP), 470 to 508 (EWAM…VMGS), 509 to 547 (EITC…IVDQ), and 549 to 586 (VVEN…VMMS).

It belongs to the phosphatase 2A regulatory subunit A family. As to quaternary structure, PP2A consists of a common heterodimeric core enzyme, composed of a 36 kDa catalytic subunit (subunit C) and a 65 kDa constant regulatory subunit (subunit A), that associates with a variety of regulatory subunits such as subunits B (the R2/B/PR55/B55, R3/B''/PR72/PR130/PR59 and R5/B'/B56 families). Interacts with CHIP. Interacts with SRK2E/OST1. In terms of processing, ubiquitinated. CHIP-mediated ubiquitination enhances phosphatase activity after an abiotic stress such as low temperature or darkness. In terms of tissue distribution, expressed ubiquitously at stable levels. However, higher protein levels in roots and flowers (at protein level).

The protein localises to the cytoplasm. Its subcellular location is the cytosol. It localises to the nucleus. Its function is as follows. The A subunit of protein phosphatase 2A serves as a scaffolding molecule to coordinate the assembly of the catalytic subunit and a variable regulatory B subunit. Involved during developmental process such as seedling and floral developments. Seems to act as a negative regulator of PP2A catalytic activity. This is Serine/threonine-protein phosphatase 2A 65 kDa regulatory subunit A gamma isoform (PP2AA3) from Arabidopsis thaliana (Mouse-ear cress).